The chain runs to 264 residues: tRNA (guanine-N(1)-)-methyltransferase (264 aa).

S-adenosyl-L-methionine is bound by residues G120 and I140–L145.

The protein belongs to the RNA methyltransferase TrmD family. In terms of assembly, homodimer.

The protein resides in the cytoplasm. The catalysed reaction is guanosine(37) in tRNA + S-adenosyl-L-methionine = N(1)-methylguanosine(37) in tRNA + S-adenosyl-L-homocysteine + H(+). Its function is as follows. Specifically methylates guanosine-37 in various tRNAs. The protein is tRNA (guanine-N(1)-)-methyltransferase of Halorhodospira halophila (strain DSM 244 / SL1) (Ectothiorhodospira halophila (strain DSM 244 / SL1)).